We begin with the raw amino-acid sequence, 164 residues long: Peptidyl-prolyl cis-trans isomerase A-like 4C (164 aa).

The PPIase cyclophilin-type domain maps to 7-163 (FFDITVDGKP…KKITIADCGQ (157 aa)).

It belongs to the cyclophilin-type PPIase family. PPIase A subfamily.

The protein resides in the cytoplasm. It carries out the reaction [protein]-peptidylproline (omega=180) = [protein]-peptidylproline (omega=0). In terms of biological role, PPIases accelerate the folding of proteins. It catalyzes the cis-trans isomerization of proline imidic peptide bonds in oligopeptides. The polypeptide is Peptidyl-prolyl cis-trans isomerase A-like 4C (Homo sapiens (Human)).